The primary structure comprises 657 residues: Folic acid synthesis protein FOL1 (657 aa).

A DHNA region spans residues Met1 to Leu116. The segment at Tyr149–Ala274 is HPPK. Residues Thr333–Leu641 form the Pterin-binding domain. The segment at Ile335–Lys657 is DHPS. Residue Asn340 participates in Mg(2+) binding. (7,8-dihydropterin-6-yl)methyl diphosphate is bound by residues Thr380, Asp416, and Asn435. The interval Leu466–Ile524 is disordered. The span at Asn467–Asn509 shows a compositional bias: low complexity. A compositionally biased stretch (basic and acidic residues) spans Asn514–Ile524. (7,8-dihydropterin-6-yl)methyl diphosphate is bound by residues Asp547, Lys583, and Arg629–His631.

In the N-terminal section; belongs to the DHNA family. This sequence in the central section; belongs to the HPPK family. It in the C-terminal section; belongs to the DHPS family. Requires Mg(2+) as cofactor.

The enzyme catalyses 7,8-dihydroneopterin = 6-hydroxymethyl-7,8-dihydropterin + glycolaldehyde. The catalysed reaction is 6-hydroxymethyl-7,8-dihydropterin + ATP = (7,8-dihydropterin-6-yl)methyl diphosphate + AMP + H(+). It catalyses the reaction (7,8-dihydropterin-6-yl)methyl diphosphate + 4-aminobenzoate = 7,8-dihydropteroate + diphosphate. It functions in the pathway cofactor biosynthesis; tetrahydrofolate biosynthesis; 2-amino-4-hydroxy-6-hydroxymethyl-7,8-dihydropteridine diphosphate from 7,8-dihydroneopterin triphosphate: step 3/4. It participates in cofactor biosynthesis; tetrahydrofolate biosynthesis; 2-amino-4-hydroxy-6-hydroxymethyl-7,8-dihydropteridine diphosphate from 7,8-dihydroneopterin triphosphate: step 4/4. The protein operates within cofactor biosynthesis; tetrahydrofolate biosynthesis; 7,8-dihydrofolate from 2-amino-4-hydroxy-6-hydroxymethyl-7,8-dihydropteridine diphosphate and 4-aminobenzoate: step 1/2. In terms of biological role, catalyzes three sequential steps of tetrahydrofolate biosynthesis. In Dictyostelium discoideum (Social amoeba), this protein is Folic acid synthesis protein FOL1 (fol1).